Consider the following 256-residue polypeptide: Floral homeotic protein APETALA 1 (256 aa).

In terms of domain architecture, MADS-box spans 1–61 (MGRGRVQLKR…GKLFEYSTDS (61 aa)). The K-box domain maps to 88 to 178 (NTNWSMEYNR…SKQIKEREKI (91 aa)). Residues 184–206 (EQWDQQNHGHNMPPPPPPQQHQI) form a disordered region.

Homodimer capable of binding to CArG-box sequences.

It is found in the nucleus. Its function is as follows. Transcription factor that promotes early floral meristem identity in synergy with LEAFY. Displays a redundant function with CAULIFLOWER in the up-regulation of LEAFY. Required subsequently for the transition of an inflorescence meristem into a floral meristem, and for the normal development of sepals and petals in flowers. Regulates positively B class homeotic proteins. The protein is Floral homeotic protein APETALA 1 (AP1) of Arabidopsis lyrata subsp. lyrata (Lyre-leaved rock-cress).